We begin with the raw amino-acid sequence, 556 residues long: MPAVCESLLDDIEDMVSATDPKPHDRQSARKNIVPRARKRNKNNIQEEEPPADSTIPGTQKIWIRTWGCSHNNSDGEYMAGQLAAYGYSITEQPEKADLWLLNSCTVKSPAEDHFRNSIKKAQEANKKVVVSGCVPQAQPRQDYMKGLSIIGVQQIDRVVEVVEETIKGHSVRLLGQKKDNGKRLGGARLDLPKIRKNPLIEIISINTGCLNACTYCKTKHARGELASYPVEELVDRATQSFQEGVCEIWLTSEDTGAYGRDIGTDLPTLLWKLVEVIPEGAMLRLGMTNPPYILEHLEEMAKILNHPRVYAFLHIPVQSASDSVLMDMKREYCIADFKRVVDFLKERVPGITIATDIICGFPGETDEDFKETLKLVEEYKFPSLFINQFYPRPGTPAAKMEQVLAHVKKRRTKELSQLFHSYDPYDHKIGQKQQVLVTEESFDSQYYVAHNRFYEQVLVPKDPDFMGKMVEVKIFEAGKHFMKGQPVQDSYIYTPSITKPLAKGEVSGLTEELKPPNNIPKSETLLEKHWERLQVFLFLTALLAAVIAFVGTKLV.

The disordered stretch occupies residues 17-57; the sequence is SATDPKPHDRQSARKNIVPRARKRNKNNIQEEEPPADSTIP. The region spanning 60-168 is the MTTase N-terminal domain; the sequence is QKIWIRTWGC…VVEVVEETIK (109 aa). Positions 69, 105, 134, 210, 214, and 217 each coordinate [4Fe-4S] cluster. In terms of domain architecture, Radical SAM core spans 196–427; it reads RKNPLIEIIS…QLFHSYDPYD (232 aa). A TRAM domain is found at 427-489; that stretch reads DHKIGQKQQV…KHFMKGQPVQ (63 aa). The chain crosses the membrane as a helical span at residues 536–556; the sequence is VFLFLTALLAAVIAFVGTKLV.

The protein belongs to the methylthiotransferase family. CDKAL1 subfamily. The cofactor is [4Fe-4S] cluster.

It localises to the endoplasmic reticulum membrane. The catalysed reaction is N(6)-L-threonylcarbamoyladenosine(37) in tRNA + (sulfur carrier)-SH + AH2 + 2 S-adenosyl-L-methionine = 2-methylsulfanyl-N(6)-L-threonylcarbamoyladenosine(37) in tRNA + (sulfur carrier)-H + 5'-deoxyadenosine + L-methionine + A + S-adenosyl-L-homocysteine + 2 H(+). Functionally, catalyzes the methylthiolation of N6-threonylcarbamoyladenosine (t(6)A), leading to the formation of 2-methylthio-N6-threonylcarbamoyladenosine (ms(2)t(6)A) at position 37 in tRNAs that read codons beginning with adenine. The sequence is that of Threonylcarbamoyladenosine tRNA methylthiotransferase (cdkal1) from Xenopus laevis (African clawed frog).